We begin with the raw amino-acid sequence, 440 residues long: MENIQKLIARYPLVEDLVALKETTWFNPGATSLAQGLPYVGLTEQDVNAAHDRLARFAPYLAKAFPQTAAAGGMIESDVVAIPAMQKRLEKEYGQTIDGEMLLKKDSHLAISGSIKARGGIYEVLTHAEKLALEAGLLTTDDDYSVLLSPEFKQFFSQYSIAVGSTGNLGLSIGIMSACIGFKVTVHMSADARAWKKAKLRSHGVTVVEYEDDYGVAVEQGRKAAQSDPNCFFIDDENSRTLFLGYAVAGQRLKAQFAQQGRVVDASHPLFVYLPCGVGGGPGGVAFGLKLAFGDNVHCFFAEPTHSPCMLLGVYTGLHDAISVQDIGIDNLTAADGLAVGRASGFVGRAMERLLDGLYTLDDQTMYDMLGWLAQEEGIRLEPSALAGMAGPQRICAATVYQQRHGFSQTQLGNATHLVWATGGGMVPEDEMEQYLAKGR.

Position 116 is an N6-(pyridoxal phosphate)lysine (K116).

Belongs to the serine/threonine dehydratase family. DsdA subfamily. In terms of assembly, monomer. The cofactor is pyridoxal 5'-phosphate.

The catalysed reaction is D-serine = pyruvate + NH4(+). This chain is D-serine dehydratase, found in Salmonella schwarzengrund (strain CVM19633).